We begin with the raw amino-acid sequence, 338 residues long: Anthranilate phosphoribosyltransferase (338 aa).

5-phospho-alpha-D-ribose 1-diphosphate is bound by residues Gly81, 84–85 (GD), Thr89, 91–94 (NIST), 109–117 (KHGNRNLSS), and Ala121. An anthranilate-binding site is contributed by Gly81. Ser93 provides a ligand contact to Mg(2+). Position 112 (Asn112) interacts with anthranilate. Anthranilate is bound at residue Arg167. Asp226 and Glu227 together coordinate Mg(2+).

The protein belongs to the anthranilate phosphoribosyltransferase family. As to quaternary structure, homodimer. Mg(2+) serves as cofactor.

It carries out the reaction N-(5-phospho-beta-D-ribosyl)anthranilate + diphosphate = 5-phospho-alpha-D-ribose 1-diphosphate + anthranilate. It functions in the pathway amino-acid biosynthesis; L-tryptophan biosynthesis; L-tryptophan from chorismate: step 2/5. Catalyzes the transfer of the phosphoribosyl group of 5-phosphorylribose-1-pyrophosphate (PRPP) to anthranilate to yield N-(5'-phosphoribosyl)-anthranilate (PRA). The sequence is that of Anthranilate phosphoribosyltransferase from Cereibacter sphaeroides (strain ATCC 17023 / DSM 158 / JCM 6121 / CCUG 31486 / LMG 2827 / NBRC 12203 / NCIMB 8253 / ATH 2.4.1.) (Rhodobacter sphaeroides).